Consider the following 318-residue polypeptide: Pantothenate kinase (318 aa).

An ATP-binding site is contributed by 96-103 (GSVSVGKS).

This sequence belongs to the prokaryotic pantothenate kinase family.

Its subcellular location is the cytoplasm. The catalysed reaction is (R)-pantothenate + ATP = (R)-4'-phosphopantothenate + ADP + H(+). The protein operates within cofactor biosynthesis; coenzyme A biosynthesis; CoA from (R)-pantothenate: step 1/5. The chain is Pantothenate kinase from Bradyrhizobium sp. (strain BTAi1 / ATCC BAA-1182).